A 329-amino-acid chain; its full sequence is Phenylalanine--tRNA ligase alpha subunit (329 aa).

Glutamate 254 lines the Mg(2+) pocket.

Belongs to the class-II aminoacyl-tRNA synthetase family. Phe-tRNA synthetase alpha subunit type 1 subfamily. Tetramer of two alpha and two beta subunits. It depends on Mg(2+) as a cofactor.

It is found in the cytoplasm. The catalysed reaction is tRNA(Phe) + L-phenylalanine + ATP = L-phenylalanyl-tRNA(Phe) + AMP + diphosphate + H(+). This Actinobacillus succinogenes (strain ATCC 55618 / DSM 22257 / CCUG 43843 / 130Z) protein is Phenylalanine--tRNA ligase alpha subunit.